A 227-amino-acid polypeptide reads, in one-letter code: Orotate phosphoribosyltransferase (227 aa).

A 5-phospho-alpha-D-ribose 1-diphosphate-binding site is contributed by Lys-34. 42–43 (FF) serves as a coordination point for orotate. Residues 80-81 (YK), Arg-106, Lys-107, Lys-110, His-112, and 131-139 (DDVISAGTS) each bind 5-phospho-alpha-D-ribose 1-diphosphate. 2 residues coordinate orotate: Ser-135 and Arg-163.

This sequence belongs to the purine/pyrimidine phosphoribosyltransferase family. PyrE subfamily. Homodimer. The cofactor is Mg(2+).

The catalysed reaction is orotidine 5'-phosphate + diphosphate = orotate + 5-phospho-alpha-D-ribose 1-diphosphate. It functions in the pathway pyrimidine metabolism; UMP biosynthesis via de novo pathway; UMP from orotate: step 1/2. In terms of biological role, catalyzes the transfer of a ribosyl phosphate group from 5-phosphoribose 1-diphosphate to orotate, leading to the formation of orotidine monophosphate (OMP). The polypeptide is Orotate phosphoribosyltransferase (Cupriavidus necator (strain ATCC 17699 / DSM 428 / KCTC 22496 / NCIMB 10442 / H16 / Stanier 337) (Ralstonia eutropha)).